The sequence spans 274 residues: Proto-oncogene FRAT1 (274 aa).

Disordered regions lie at residues 1–24, 55–107, 132–194, and 232–274; these read MPCRREEEEEAGDEAEGEEDDDSF, AHDR…PGAV, GASA…DDPH, and GPLS…VPGS. The segment covering 7-23 has biased composition (acidic residues); the sequence is EEEEAGDEAEGEEDDDS. Positions 191-214 are involved in GSK-3 binding; sequence DDPHRLLQQLVLSGNLIKEAVRRL. Residues Ser-243 and Ser-246 each carry the phosphoserine modification.

It belongs to the GSK-3-binding protein family. As to quaternary structure, binds DVL1. Binds GSK-3 and prevent GSK-3-dependent phosphorylation. Phosphorylated. In terms of tissue distribution, highly expressed in testis. Lower level of expression in spleen, thymus and brain.

It is found in the cytoplasm. Functionally, positively regulates the Wnt signaling pathway by stabilizing beta-catenin through the association with GSK-3. May play a role in tumor progression and collaborate with PIM1 and MYC in lymphomagenesis. This chain is Proto-oncogene FRAT1 (Frat1), found in Mus musculus (Mouse).